A 255-amino-acid chain; its full sequence is Type III pantothenate kinase (255 aa).

An ATP-binding site is contributed by 7 to 14 (DVGNTRLK). Substrate contacts are provided by residues tyrosine 96 and 103-106 (GADR). Residue aspartate 105 is the Proton acceptor of the active site. An ATP-binding site is contributed by threonine 133. Threonine 183 provides a ligand contact to substrate.

Belongs to the type III pantothenate kinase family. In terms of assembly, homodimer. The cofactor is NH4(+). K(+) is required as a cofactor.

It is found in the cytoplasm. The enzyme catalyses (R)-pantothenate + ATP = (R)-4'-phosphopantothenate + ADP + H(+). The protein operates within cofactor biosynthesis; coenzyme A biosynthesis; CoA from (R)-pantothenate: step 1/5. Its function is as follows. Catalyzes the phosphorylation of pantothenate (Pan), the first step in CoA biosynthesis. The chain is Type III pantothenate kinase from Polaromonas sp. (strain JS666 / ATCC BAA-500).